The following is a 402-amino-acid chain: Prophage integrase IntZ (402 aa).

Residues 103–183 enclose the Core-binding (CB) domain; sequence AGFKKVAEDW…RIGEIFKFAV (81 aa). The Tyr recombinase domain maps to 206–381; that stretch reads GHNAWIPISE…AYLKQRRAMM (176 aa). Residues arginine 244, lysine 271, histidine 332, arginine 335, and histidine 359 contribute to the active site. The active-site O-(3'-phospho-DNA)-tyrosine intermediate is the tyrosine 368.

The protein belongs to the 'phage' integrase family.

Its function is as follows. Integrase is necessary for integration of the phage into the host genome by site-specific recombination. In conjunction with excisionase, integrase is also necessary for excision of the prophage from the host genome. This Escherichia coli (strain K12) protein is Prophage integrase IntZ (intZ).